The sequence spans 177 residues: Large ribosomal subunit protein uL6 (177 aa).

It belongs to the universal ribosomal protein uL6 family. As to quaternary structure, part of the 50S ribosomal subunit.

Functionally, this protein binds to the 23S rRNA, and is important in its secondary structure. It is located near the subunit interface in the base of the L7/L12 stalk, and near the tRNA binding site of the peptidyltransferase center. The polypeptide is Large ribosomal subunit protein uL6 (Klebsiella pneumoniae subsp. pneumoniae (strain ATCC 700721 / MGH 78578)).